The sequence spans 410 residues: MLITVPLAGELKFYPLNEEFRVSFGAPVFFFFLSLLRHVPAVLPGFLTGAAVFIFRVFLELWGGGHNGLTPILYDQASGFFFYMTYACLFSILKANRFRERPIMLGFIGFMIEVVSDCVELTVQFLIFHTVVTPEKITDIAVIAISHTFIVMSFYSVLKLYETQSREKQTRQQHEHMLMIVSNLYEETVHLKKTLKTTEKVTNDSYQLYREMKGKDVQLSGRILRLAGEIHEVKKDNQRIFAGLSKLISNESLRDYMRASDLLQLVIRMNEKYAEALGKQIDFYCSIEGEHDEYHVFIVLSIINNLTANAVEAMDEEGMVSLRLRKPNESMVEFQVEDNGPGISEKIGDIVFDPGFTSKYDEFGTPSTGIGLSYVKEIVTELEGDITFDNQQRGVVFAIRLPVRHLIQKG.

Over 1–15 the chain is Extracellular; the sequence is MLITVPLAGELKFYP. Residues 16-36 traverse the membrane as a helical segment; sequence LNEEFRVSFGAPVFFFFLSLL. Residues 37–38 lie on the Cytoplasmic side of the membrane; that stretch reads RH. Residues 39–59 form a helical membrane-spanning segment; the sequence is VPAVLPGFLTGAAVFIFRVFL. At 60 to 71 the chain is on the extracellular side; it reads ELWGGGHNGLTP. A helical transmembrane segment spans residues 72–92; it reads ILYDQASGFFFYMTYACLFSI. The Cytoplasmic portion of the chain corresponds to 93–102; the sequence is LKANRFRERP. Residues 103 to 123 traverse the membrane as a helical segment; that stretch reads IMLGFIGFMIEVVSDCVELTV. The Extracellular portion of the chain corresponds to 124–139; sequence QFLIFHTVVTPEKITD. A helical membrane pass occupies residues 140 to 160; that stretch reads IAVIAISHTFIVMSFYSVLKL. The Cytoplasmic portion of the chain corresponds to 161-410; that stretch reads YETQSREKQT…LPVRHLIQKG (250 aa). Residues 189-405 enclose the Histidine kinase domain; sequence VHLKKTLKTT…VFAIRLPVRH (217 aa). His-190 is modified (phosphohistidine; by autocatalysis).

As to quaternary structure, homotrimer. Under poor nitrogen source such as nitrate, the complex between GlnK and AmtB, which are the transmembrane ammonium transporter and its cognate regulator, respectively, interacts with TnrA. GlnK-ATP complex are not able to bind TnrA.

It localises to the cell membrane. It catalyses the reaction ATP + protein L-histidine = ADP + protein N-phospho-L-histidine.. Member of the two-component regulatory system GlnK/GlnL that positively regulates the expression of the glsA-glnT operon in response to glutamine. It seems that autophosphorylated GlnK transfers a phosphoryl group to GlnL, which positively regulates the expression of the glsA-glnT operon. Interaction between GlnK-AmtB complex and TnrA protects TnrA from proteolytic degradation. This chain is Sensor histidine kinase GlnK, found in Bacillus subtilis (strain 168).